The following is a 330-amino-acid chain: Phosphate acyltransferase (330 aa).

Belongs to the PlsX family. In terms of assembly, homodimer. Probably interacts with PlsY.

Its subcellular location is the cytoplasm. The catalysed reaction is a fatty acyl-[ACP] + phosphate = an acyl phosphate + holo-[ACP]. It functions in the pathway lipid metabolism; phospholipid metabolism. Its function is as follows. Catalyzes the reversible formation of acyl-phosphate (acyl-PO(4)) from acyl-[acyl-carrier-protein] (acyl-ACP). This enzyme utilizes acyl-ACP as fatty acyl donor, but not acyl-CoA. The sequence is that of Phosphate acyltransferase from Bacillus thuringiensis (strain Al Hakam).